A 326-amino-acid polypeptide reads, in one-letter code: Phosphatidylinositol:ceramide inositolphosphotransferase (326 aa).

Helical transmembrane passes span 33 to 53 (LLLAGLVFQYIHGLAARGVHY), 82 to 102 (SVFTFIFISFLLWSFHPFIYH), 115 to 135 (VLAFLVASQFLRIITFYSTQL), 169 to 189 (VLFGCGDLIFSSHMIFTLVFV), 199 to 219 (RLIKILAWLMAIIQSLLIIAS), and 222 to 242 (HYSVDVVVAWYTVNLVVFFID). Histidine 181 is an active-site residue. Catalysis depends on residues histidine 222 and aspartate 226. Residues 306-326 (MNGKHGEDINHTLSDATPNGT) are disordered. Residues 316–326 (HTLSDATPNGT) are compositionally biased toward polar residues.

Belongs to the sphingomyelin synthase family.

The protein resides in the golgi apparatus. Its subcellular location is the trans-Golgi network membrane. Functionally, catalyzes the transfer of the phosphorylinositol group from phosphatidylinositol (PI) to phytoceramide, an essential step in sphingolipid biosynthesis. May play an important role in modulating plant programmed cell death (PCD) associated with defense (e.g. toward Golovinomyces cichoracearum) by promoting sphingolipid metabolism and regulating ceramide accumulation. In Oryza sativa subsp. indica (Rice), this protein is Phosphatidylinositol:ceramide inositolphosphotransferase (ERH1).